We begin with the raw amino-acid sequence, 643 residues long: Fructose-1,6-bisphosphatase class 3 (643 aa).

It belongs to the FBPase class 3 family. Requires Mn(2+) as cofactor.

It carries out the reaction beta-D-fructose 1,6-bisphosphate + H2O = beta-D-fructose 6-phosphate + phosphate. It participates in carbohydrate biosynthesis; gluconeogenesis. This is Fructose-1,6-bisphosphatase class 3 from Lacticaseibacillus casei (strain BL23) (Lactobacillus casei).